A 290-amino-acid chain; its full sequence is Protease HtpX homolog (290 aa).

2 consecutive transmembrane segments (helical) span residues 4 to 24 (ILLFVLTNVMVVAVLGIVASL) and 39 to 59 (TALLGFALVMGFGGAIISLLI). Histidine 144 contributes to the Zn(2+) binding site. Glutamate 145 is a catalytic residue. Histidine 148 serves as a coordination point for Zn(2+). 2 helical membrane passes run 159-179 (LIQGVMNTFVVFLSRVIGYAV) and 199-219 (VSTIVLDIVLGFAAAIVVAWF). Glutamate 224 lines the Zn(2+) pocket.

The protein belongs to the peptidase M48B family. It depends on Zn(2+) as a cofactor.

Its subcellular location is the cell inner membrane. The chain is Protease HtpX homolog from Variovorax paradoxus (strain S110).